Consider the following 1049-residue polypeptide: MEPNTMASFDDEHRHSSFSAKICKVCGDEVKDDDNGQTFVACHVCVYPVCKPCYEYERSNGNKCCPQCNTLYKRHKGSPKIAGDEENNGPDDSDDELNIKYRQDGSSIHQNFAYGSENGDYNSKQQWRPNGRAFSSTGSVLGKDFEAERDGYTDAEWKERVDKWKARQEKRGLVTKGEQTNEDKEDDEEEYLDAEARQPLWRKVPISSSKISPYRIVIVLRLVILVFFFRFRILTPAKDAYPLWLISVICEIWFALSWILDQFPKWFPINRETYLDRLSMRFERDGEKNKLAPVDVFVSTVDPLKEPPIITANTILSILAVDYPVNKVSCYVSDDGASMLLFDTLSETSEFARRWVPFCKKYNVEPRAPEFYFSEKIDYLKDKVQTTFVKDRRAMKREYEEFKVRINALVAKAQKKPEEGWVMQDGTPWPGNNTRDHPGMIQVYLGKEGAFDIDGNELPRLVYVSREKRPGYAHHKKAGAMNAMVRVSAVLTNAPFMLNLDCDHYINNSKAIRESMCFLMDPQLGKKLCYVQFPQRFDGIDLNDRYANRNIVFFDINMRGLDGIQGPVYVGTGCVFNRPALYGYEPPVSEKRKKMTCDCWPSWICCCCGGGNRNHKSDSSKKKSGIKSLFSKLKKKTKKKSDDKTMSSYSRKRSSTEAIFDLEDIEEGLEGYDELEKSSLMSQKNFEKRFGMSPVFIASTLMENGGLPEATNTSSLIKEAIHVISCGYEEKTEWGKEIGWIYGSVTEDILTGFRMHCRGWKSVYCMPKRPAFKGSAPINLSDRLHQVLRWALGSVEIFFSRHCPLWYAWGGKLKILERLAYINTIVYPFTSIPLLAYCTIPAVCLLTGKFIIPTINNFASIWFLALFLSIIATAILELRWSGVSINDLWRNEQFWVIGGVSAHLFAVFQGLLKVLFGVDTNFTVTSKGASDEADEFGDLYLFKWTTLLIPPTTLIILNMVGVVAGVSDAINNGYGSWGPLFGKLFFAFWVIVHLYPFLKGLMGRQNRTPTIVVLWSILLASIFSLVWVRIDPFLPKQTGPLLKQCGVDC.

Over 1-215 (MEPNTMASFD…ISSSKISPYR (215 aa)) the chain is Cytoplasmic. Residues C23, C26, C42, C45, C50, C53, C65, and C68 each contribute to the Zn(2+) site. The RING-type; degenerate zinc-finger motif lies at 23 to 69 (CKVCGDEVKDDDNGQTFVACHVCVYPVCKPCYEYERSNGNKCCPQCN). The interval 76 to 98 (KGSPKIAGDEENNGPDDSDDELN) is disordered. Residues 84–96 (DEENNGPDDSDDE) show a composition bias toward acidic residues. The residue at position 135 (S135) is a Phosphoserine. Residues 216 to 236 (IVIVLRLVILVFFFRFRILTP) traverse the membrane as a helical segment. Over 237-239 (AKD) the chain is Extracellular. A helical membrane pass occupies residues 240–260 (AYPLWLISVICEIWFALSWIL). The Cytoplasmic segment spans residues 261–831 (DQFPKWFPIN…INTIVYPFTS (571 aa)). The UDP-alpha-D-glucose site is built by S299, K305, E306, and D335. D335 is a catalytic residue. The stretch at 389–416 (VKDRRAMKREYEEFKVRINALVAKAQKK) forms a coiled coil. K476 is a binding site for UDP-alpha-D-glucose. 2 residues coordinate Mn(2+): K477 and D501. D748 is an active-site residue. The chain crosses the membrane as a helical span at residues 832 to 852 (IPLLAYCTIPAVCLLTGKFII). The Extracellular segment spans residues 853 to 857 (PTINN). A helical membrane pass occupies residues 858–878 (FASIWFLALFLSIIATAILEL). Residues 879–895 (RWSGVSINDLWRNEQFW) lie on the Cytoplasmic side of the membrane. A helical transmembrane segment spans residues 896-916 (VIGGVSAHLFAVFQGLLKVLF). At 917-945 (GVDTNFTVTSKGASDEADEFGDLYLFKWT) the chain is on the extracellular side. The N-linked (GlcNAc...) asparagine glycan is linked to N921. Residues 946–966 (TLLIPPTTLIILNMVGVVAGV) form a helical membrane-spanning segment. Residues 967–977 (SDAINNGYGSW) are Cytoplasmic-facing. A helical transmembrane segment spans residues 978 to 998 (GPLFGKLFFAFWVIVHLYPFL). Residues 999 to 1007 (KGLMGRQNR) lie on the Extracellular side of the membrane. Residues 1008-1028 (TPTIVVLWSILLASIFSLVWV) traverse the membrane as a helical segment. Residues 1029–1049 (RIDPFLPKQTGPLLKQCGVDC) are Cytoplasmic-facing.

It belongs to the glycosyltransferase 2 family. Plant cellulose synthase subfamily. Interacts with CESA7 and CESA8. Assembly with CESA7 and CESA8 is required for functional complex and localization in secondary cell wall deposition sites. Interacts with STL1 and STL2, but not with GOT1. Zn(2+) is required as a cofactor. Mn(2+) serves as cofactor. S-acylated. As to expression, confined to secondary cell wall developing tissues such as xylems and interfascicular regions. Expressed in roots, hypocotyls, leaves, inflorescences and flowers.

It is found in the cell membrane. The enzyme catalyses [(1-&gt;4)-beta-D-glucosyl](n) + UDP-alpha-D-glucose = [(1-&gt;4)-beta-D-glucosyl](n+1) + UDP + H(+). It functions in the pathway glycan metabolism; plant cellulose biosynthesis. Catalytic subunit of cellulose synthase terminal complexes ('rosettes'), required for beta-1,4-glucan microfibril crystallization, a major mechanism of the cell wall formation. Involved in the secondary cell wall formation. Required for the xylem cell wall thickening. This Arabidopsis thaliana (Mouse-ear cress) protein is Cellulose synthase A catalytic subunit 4 [UDP-forming].